The following is a 180-amino-acid chain: Large ribosomal subunit protein uL5 (180 aa).

This sequence belongs to the universal ribosomal protein uL5 family. In terms of assembly, part of the 50S ribosomal subunit; part of the 5S rRNA/L5/L18/L25 subcomplex. Contacts the 5S rRNA and the P site tRNA. Forms a bridge to the 30S subunit in the 70S ribosome.

This is one of the proteins that bind and probably mediate the attachment of the 5S RNA into the large ribosomal subunit, where it forms part of the central protuberance. In the 70S ribosome it contacts protein S13 of the 30S subunit (bridge B1b), connecting the 2 subunits; this bridge is implicated in subunit movement. Contacts the P site tRNA; the 5S rRNA and some of its associated proteins might help stabilize positioning of ribosome-bound tRNAs. The sequence is that of Large ribosomal subunit protein uL5 from Synechococcus sp. (strain JA-2-3B'a(2-13)) (Cyanobacteria bacterium Yellowstone B-Prime).